The sequence spans 288 residues: Pantothenate synthetase (288 aa).

30–37 (MGNLHNGH) is a binding site for ATP. Histidine 37 acts as the Proton donor in catalysis. Glutamine 61 contributes to the (R)-pantoate binding site. Beta-alanine is bound at residue glutamine 61. An ATP-binding site is contributed by 149–152 (GQKD). Glutamine 155 is a (R)-pantoate binding site. ATP contacts are provided by residues valine 178 and 186-189 (LSSR).

This sequence belongs to the pantothenate synthetase family. As to quaternary structure, homodimer.

It is found in the cytoplasm. It carries out the reaction (R)-pantoate + beta-alanine + ATP = (R)-pantothenate + AMP + diphosphate + H(+). It participates in cofactor biosynthesis; (R)-pantothenate biosynthesis; (R)-pantothenate from (R)-pantoate and beta-alanine: step 1/1. Functionally, catalyzes the condensation of pantoate with beta-alanine in an ATP-dependent reaction via a pantoyl-adenylate intermediate. The protein is Pantothenate synthetase of Tolumonas auensis (strain DSM 9187 / NBRC 110442 / TA 4).